A 208-amino-acid polypeptide reads, in one-letter code: Urease accessory protein UreG 2 (208 aa).

16 to 23 is a GTP binding site; it reads GPVGSGKT.

This sequence belongs to the SIMIBI class G3E GTPase family. UreG subfamily. In terms of assembly, homodimer. UreD, UreF and UreG form a complex that acts as a GTP-hydrolysis-dependent molecular chaperone, activating the urease apoprotein by helping to assemble the nickel containing metallocenter of UreC. The UreE protein probably delivers the nickel.

The protein localises to the cytoplasm. Functionally, facilitates the functional incorporation of the urease nickel metallocenter. This process requires GTP hydrolysis, probably effectuated by UreG. This chain is Urease accessory protein UreG 2, found in Methylobacterium radiotolerans (strain ATCC 27329 / DSM 1819 / JCM 2831 / NBRC 15690 / NCIMB 10815 / 0-1).